A 711-amino-acid chain; its full sequence is Dendrin (711 aa).

4 disordered regions span residues 1–22 (MLDGPLFSEGPDSPRELQDEES), 49–273 (APSR…KKRL), 324–446 (DLNS…SQGL), and 479–677 (PSGV…AELS). Pro residues predominate over residues 75–84 (PGSPQPPPRR). The stretch at 102–134 (LAEVRAREQEKRKAASQEREAKETERKRRKAGG) forms a coiled coil. Over residues 105–127 (VRAREQEKRKAASQEREAKETER) the composition is skewed to basic and acidic residues. Residues 113-131 (RKAASQEREAKETERKRRK) form a nuclear localization region. Over residues 150 to 161 (APRVAQLAGLPA) the composition is skewed to low complexity. The segment at 186 to 236 (GSAWAGPWGGRRPGPPSYEAHLLLRGSAGTAPRRRWDRPPPYVAPPSYEGP) is interaction with MAGI2. Low complexity-rich tracts occupy residues 252–262 (PTSSAPAATPA) and 346–356 (APAGSATAAPC). The segment at 341-436 (AGTEIAPAGS…LEGWKATRRA (96 aa)) is interaction with ACTN1. A Phosphoserine modification is found at serine 389. The tract at residues 408-709 (GGTGWRESLG…IRGTQQGNRK (302 aa)) is interaction with CD2AP and NPHS1. A compositionally biased stretch (basic and acidic residues) spans 529 to 546 (GEAEGGRPGDSTLEERTF).

Forms a ternary complex with MAGI2 and SH3KBP1; recruits DDN to the cytoplasm. Interacts with MAGI1. Interacts with ACTN1 and may interact with WWC1. Interacts with the podocyte slit diaphragm proteins CD2AP, NPHS1 and NPHS2; the interaction with CD2AP and NPHS1 is direct. As to expression, specifically expressed in brain and kidney. Expressed in kidney glomerular capillary loops (at protein level).

The protein localises to the cell projection. Its subcellular location is the dendritic spine membrane. The protein resides in the cytoplasm. It localises to the endoplasmic reticulum membrane. It is found in the perikaryon. The protein localises to the nucleus. Its function is as follows. Promotes apoptosis of kidney glomerular podocytes. Podocytes are highly specialized cells essential to the ultrafiltration of blood, resulting in the extraction of urine and the retention of protein. This Homo sapiens (Human) protein is Dendrin (DDN).